Reading from the N-terminus, the 296-residue chain is D-alanine--D-alanine ligase (296 aa).

The ATP-grasp domain maps to 103–293; the sequence is KEILMHYRMP…FDSFVKRIIE (191 aa). 129–180 contributes to the ATP binding site; sequence ISFPVAVKPSSGGSSIATFKVKSIQELKHAYEEASKYGEVMIEQWVTGKEIT. 3 residues coordinate Mg(2+): aspartate 247, glutamate 260, and asparagine 262.

This sequence belongs to the D-alanine--D-alanine ligase family. Mg(2+) is required as a cofactor. Mn(2+) serves as cofactor.

The protein resides in the cytoplasm. It carries out the reaction 2 D-alanine + ATP = D-alanyl-D-alanine + ADP + phosphate + H(+). Its pathway is cell wall biogenesis; peptidoglycan biosynthesis. Functionally, cell wall formation. This chain is D-alanine--D-alanine ligase, found in Francisella tularensis subsp. tularensis (strain WY96-3418).